Consider the following 326-residue polypeptide: ELMO domain-containing protein 1 (326 aa).

In terms of domain architecture, ELMO spans 133–306; that stretch reads QHEEMLLKLW…KFRKRIIKQL (174 aa).

Its function is as follows. Acts as a GTPase-activating protein (GAP) toward guanine nucleotide exchange factors like ARL2, ARL3, ARF1 and ARF6, but not for GTPases outside the Arf family. This chain is ELMO domain-containing protein 1 (ELMOD1), found in Pongo abelii (Sumatran orangutan).